Reading from the N-terminus, the 162-residue chain is Regulator of sigma D (162 aa).

Belongs to the Rsd/AlgQ family. As to quaternary structure, interacts with RpoD.

The protein resides in the cytoplasm. Binds RpoD and negatively regulates RpoD-mediated transcription activation by preventing the interaction between the primary sigma factor RpoD with the catalytic core of the RNA polymerase and with promoter DNA. May be involved in replacement of the RNA polymerase sigma subunit from RpoD to RpoS during the transition from exponential growth to the stationary phase. This is Regulator of sigma D from Salmonella agona (strain SL483).